The following is a 179-amino-acid chain: Cytochrome b6-f complex iron-sulfur subunit (179 aa).

A helical transmembrane segment spans residues 21 to 43; sequence LLTFGSVTGVALGALYPVVNYFI. The region spanning 61-162 is the Rieske domain; sequence GNDVVLSKFL…VSVTDDKVFL (102 aa). The [2Fe-2S] cluster site is built by C108, H110, C126, and H129. Residues C113 and C128 are joined by a disulfide bond.

The protein belongs to the Rieske iron-sulfur protein family. In terms of assembly, the 4 large subunits of the cytochrome b6-f complex are cytochrome b6, subunit IV (17 kDa polypeptide, PetD), cytochrome f and the Rieske protein, while the 4 small subunits are PetG, PetL, PetM and PetN. The complex functions as a dimer. It depends on [2Fe-2S] cluster as a cofactor.

It is found in the cellular thylakoid membrane. It catalyses the reaction 2 oxidized [plastocyanin] + a plastoquinol + 2 H(+)(in) = 2 reduced [plastocyanin] + a plastoquinone + 4 H(+)(out). In terms of biological role, component of the cytochrome b6-f complex, which mediates electron transfer between photosystem II (PSII) and photosystem I (PSI), cyclic electron flow around PSI, and state transitions. In Synechococcus elongatus (strain ATCC 33912 / PCC 7942 / FACHB-805) (Anacystis nidulans R2), this protein is Cytochrome b6-f complex iron-sulfur subunit.